The primary structure comprises 288 residues: Bifunctional protein FolD (288 aa).

NADP(+) is bound by residues 166 to 168, S191, and I232; that span reads GRS.

It belongs to the tetrahydrofolate dehydrogenase/cyclohydrolase family. In terms of assembly, homodimer.

It carries out the reaction (6R)-5,10-methylene-5,6,7,8-tetrahydrofolate + NADP(+) = (6R)-5,10-methenyltetrahydrofolate + NADPH. The catalysed reaction is (6R)-5,10-methenyltetrahydrofolate + H2O = (6R)-10-formyltetrahydrofolate + H(+). The protein operates within one-carbon metabolism; tetrahydrofolate interconversion. In terms of biological role, catalyzes the oxidation of 5,10-methylenetetrahydrofolate to 5,10-methenyltetrahydrofolate and then the hydrolysis of 5,10-methenyltetrahydrofolate to 10-formyltetrahydrofolate. This is Bifunctional protein FolD from Rickettsia rickettsii (strain Iowa).